The sequence spans 31 residues: Conotoxin (31 aa).

It belongs to the conotoxin S superfamily. Post-translationally, contains 5 disulfide bonds. As to expression, expressed by the venom duct.

The protein localises to the secreted. This is Conotoxin from Conus striatus (Striated cone).